Reading from the N-terminus, the 288-residue chain is Polyamine aminopropyltransferase (288 aa).

Positions 9-238 constitute a PABS domain; that stretch reads ETLHDQFGQY…GIMTFAWATD (230 aa). Q33 serves as a coordination point for S-methyl-5'-thioadenosine. Spermidine is bound by residues H64 and D88. S-methyl-5'-thioadenosine is bound by residues E108 and 140–141; that span reads DG. D158 acts as the Proton acceptor in catalysis. A spermidine-binding site is contributed by 158 to 161; sequence DCTD. P165 provides a ligand contact to S-methyl-5'-thioadenosine.

The protein belongs to the spermidine/spermine synthase family. As to quaternary structure, homodimer or homotetramer.

The protein localises to the cytoplasm. The catalysed reaction is S-adenosyl 3-(methylsulfanyl)propylamine + putrescine = S-methyl-5'-thioadenosine + spermidine + H(+). It functions in the pathway amine and polyamine biosynthesis; spermidine biosynthesis; spermidine from putrescine: step 1/1. In terms of biological role, catalyzes the irreversible transfer of a propylamine group from the amino donor S-adenosylmethioninamine (decarboxy-AdoMet) to putrescine (1,4-diaminobutane) to yield spermidine. This chain is Polyamine aminopropyltransferase, found in Shigella boydii serotype 4 (strain Sb227).